A 101-amino-acid polypeptide reads, in one-letter code: Small ribosomal subunit protein uS14A (101 aa).

Residues 29 to 60 (EIIRSPRSTPEQRTAAQNELAHQPRDASAVRV) form a disordered region. The segment covering 34 to 45 (PRSTPEQRTAAQ) has biased composition (polar residues).

It belongs to the universal ribosomal protein uS14 family. Part of the 30S ribosomal subunit. Contacts proteins S3 and S10.

Its function is as follows. Binds 16S rRNA, required for the assembly of 30S particles and may also be responsible for determining the conformation of the 16S rRNA at the A site. This chain is Small ribosomal subunit protein uS14A, found in Mycolicibacterium paratuberculosis (strain ATCC BAA-968 / K-10) (Mycobacterium paratuberculosis).